The primary structure comprises 403 residues: F-box only protein 22 (403 aa).

Residue methionine 1 is modified to N-acetylmethionine. Residues 19-71 (STFVLSNLAEVVERVLTFLPAKALLRVACVCRLWRECVRRVLRTHRSVTWISA) enclose the F-box domain. Residue serine 128 is modified to Phosphoserine. At lysine 194 the chain carries N6-acetyllysine.

Directly interacts with SKP1 and CUL1.

The protein resides in the cytoplasm. It localises to the myofibril. The protein localises to the sarcomere. It is found in the z line. In terms of biological role, substrate-recognition component of the SCF (SKP1-CUL1-F-box protein)-type E3 ubiquitin ligase complex. Promotes the proteasome-dependent degradation of key sarcomeric proteins, such as alpha-actinin (ACTN2) and filamin-C (FLNC), essential for maintenance of normal contractile function. The chain is F-box only protein 22 (FBXO22) from Pongo abelii (Sumatran orangutan).